Reading from the N-terminus, the 283-residue chain is Isochorismatase domain-containing protein 1 (283 aa).

The protein belongs to the isochorismatase family.

The protein is Isochorismatase domain-containing protein 1 (isoc1) of Danio rerio (Zebrafish).